A 30-amino-acid polypeptide reads, in one-letter code: Snaclec coagulation factor IX/factor X-binding protein subunit B (30 aa).

An intrachain disulfide couples Cys-2 to Cys-13. In terms of domain architecture, C-type lectin spans 9 to 30 (YEGHCYRVFTEPQNWADAEKFC).

This sequence belongs to the snaclec family. Heterodimer of subunits A and B; disulfide-linked. Post-translationally, glycosylated. In terms of tissue distribution, expressed by the venom gland.

The protein resides in the secreted. Its function is as follows. Anticoagulant protein which binds to the gamma-carboxyglutamic acid-domain regions of factors IX (F9) and factor X (F10) in the presence of calcium with a 1 to 1 stoichiometry. The protein is Snaclec coagulation factor IX/factor X-binding protein subunit B of Bothrops jararaca (Jararaca).